Consider the following 202-residue polypeptide: MGNTKSGALSKEILEELQLNTKFTQEELCTWYQSFLKECPSGRISKKQFESIYSKFFPDADPKAYAQHVFRSFDANNDGTLDFKEYMIALMMTSSGKANQKLEWAFCLYDVDGNGTINKKEVLEIITAIFKMINAEDQKHLPEDENTPEKRTNKIWVYFGKKDDDKLTEGEFIQGIVKNKEILRLIQYEPQKVKDKLKEKKH.

A lipid anchor (N-myristoyl glycine) is attached at glycine 2. 4 EF-hand domains span residues 25–60 (QEEL…FPDA), 61–96 (DPKA…TSSG), 97–132 (KANQ…IFKM), and 147–182 (TPEK…NKEI). Positions 74, 76, 78, 80, 85, 110, 112, 114, 116, and 121 each coordinate Ca(2+).

Belongs to the recoverin family. In terms of processing, the N-terminus is blocked.

Functionally, calcium-dependent regulator of light sensitivity of cGMP phosphodiesterase in rod outer segments. Controls rhodopsin phosphorylation in a Ca(2+)-dependent manner. The protein is S-modulin of Aquarana catesbeiana (American bullfrog).